Consider the following 362-residue polypeptide: Glutaminase-asparaginase (362 aa).

The N-terminal stretch at 1 to 25 (MKPLLHAFAPGVMALMLLLPQAAQA) is a signal peptide. In terms of domain architecture, Asparaginase/glutaminase spans 35–362 (SNVVILATGG…KELQRIFWEY (328 aa)). Catalysis depends on Thr45, which acts as the Acyl-ester intermediate. Substrate-binding positions include Ser92 and 125 to 126 (TD).

This sequence belongs to the asparaginase 1 family. As to quaternary structure, homotetramer.

The protein resides in the periplasm. It catalyses the reaction L-glutamine + H2O = L-glutamate + NH4(+). The catalysed reaction is L-asparagine + H2O = L-aspartate + NH4(+). The protein is Glutaminase-asparaginase (ansB) of Pseudomonas aeruginosa (strain ATCC 15692 / DSM 22644 / CIP 104116 / JCM 14847 / LMG 12228 / 1C / PRS 101 / PAO1).